A 535-amino-acid polypeptide reads, in one-letter code: UDP-N-acetylmuramoyl-L-alanyl-D-glutamate--2,6-diaminopimelate ligase (535 aa).

Leu67 lines the UDP-N-acetyl-alpha-D-muramoyl-L-alanyl-D-glutamate pocket. ATP is bound at residue 153-159; sequence GTSGKTT. UDP-N-acetyl-alpha-D-muramoyl-L-alanyl-D-glutamate contacts are provided by residues 195-196, Ser222, and Arg230; that span reads TT. N6-carboxylysine is present on Lys262. Meso-2,6-diaminopimelate-binding positions include Arg424, 448-451, Gly502, and Glu506; that span reads DNPR. Positions 448–451 match the Meso-diaminopimelate recognition motif motif; that stretch reads DNPR.

It belongs to the MurCDEF family. MurE subfamily. The cofactor is Mg(2+). In terms of processing, carboxylation is probably crucial for Mg(2+) binding and, consequently, for the gamma-phosphate positioning of ATP.

It is found in the cytoplasm. It catalyses the reaction UDP-N-acetyl-alpha-D-muramoyl-L-alanyl-D-glutamate + meso-2,6-diaminopimelate + ATP = UDP-N-acetyl-alpha-D-muramoyl-L-alanyl-gamma-D-glutamyl-meso-2,6-diaminopimelate + ADP + phosphate + H(+). It participates in cell wall biogenesis; peptidoglycan biosynthesis. Functionally, catalyzes the addition of meso-diaminopimelic acid to the nucleotide precursor UDP-N-acetylmuramoyl-L-alanyl-D-glutamate (UMAG) in the biosynthesis of bacterial cell-wall peptidoglycan. In Mycobacterium bovis (strain ATCC BAA-935 / AF2122/97), this protein is UDP-N-acetylmuramoyl-L-alanyl-D-glutamate--2,6-diaminopimelate ligase.